The primary structure comprises 150 residues: Flagellar assembly factor FliW (150 aa).

Belongs to the FliW family. Interacts with translational regulator CsrA and flagellin(s).

It localises to the cytoplasm. Functionally, acts as an anti-CsrA protein, binds CsrA and prevents it from repressing translation of its target genes, one of which is flagellin. Binds to flagellin and participates in the assembly of the flagellum. This is Flagellar assembly factor FliW from Caldanaerobacter subterraneus subsp. tengcongensis (strain DSM 15242 / JCM 11007 / NBRC 100824 / MB4) (Thermoanaerobacter tengcongensis).